A 191-amino-acid polypeptide reads, in one-letter code: Guanylate kinase (191 aa).

In terms of domain architecture, Guanylate kinase-like spans 4-182; sequence GRLIVVSGPS…AREEMIEIMR (179 aa). ATP is bound at residue 11 to 18; that stretch reads GPSGAGKS.

The protein belongs to the guanylate kinase family.

Its subcellular location is the cytoplasm. The catalysed reaction is GMP + ATP = GDP + ADP. In terms of biological role, essential for recycling GMP and indirectly, cGMP. The polypeptide is Guanylate kinase (Rubrobacter xylanophilus (strain DSM 9941 / JCM 11954 / NBRC 16129 / PRD-1)).